The following is a 335-amino-acid chain: ATP-dependent 6-phosphofructokinase (335 aa).

Gly11 contacts ATP. 21-25 provides a ligand contact to ADP; it reads RAVVR. Residues 72–73 and 102–105 contribute to the ATP site; these read RY and GDGS. Mg(2+) is bound at residue Asp103. 125 to 127 contributes to the substrate binding site; that stretch reads TID. The active-site Proton acceptor is Asp127. An ADP-binding site is contributed by Arg154. Substrate-binding positions include Arg162 and 169–171; that span reads MGR. ADP is bound by residues 185–187 and 213–215; these read GAD and KKH. Substrate-binding positions include Glu222, Arg244, and 250-253; that span reads HIQR.

The protein belongs to the phosphofructokinase type A (PFKA) family. ATP-dependent PFK group I subfamily. Prokaryotic clade 'B1' sub-subfamily. As to quaternary structure, homotetramer. Mg(2+) serves as cofactor.

It is found in the cytoplasm. It catalyses the reaction beta-D-fructose 6-phosphate + ATP = beta-D-fructose 1,6-bisphosphate + ADP + H(+). It functions in the pathway carbohydrate degradation; glycolysis; D-glyceraldehyde 3-phosphate and glycerone phosphate from D-glucose: step 3/4. Allosterically activated by ADP and other diphosphonucleosides, and allosterically inhibited by phosphoenolpyruvate. Its function is as follows. Catalyzes the phosphorylation of D-fructose 6-phosphate to fructose 1,6-bisphosphate by ATP, the first committing step of glycolysis. The sequence is that of ATP-dependent 6-phosphofructokinase from Streptococcus pneumoniae (strain ATCC BAA-255 / R6).